Reading from the N-terminus, the 224-residue chain is MDVMKGTTTVGLICDDAVILATDKRASLGNLVADKEAKKLYKIDDYIAMTIAGSVGDAQAIVRLLTAEAKLYKMRTGRNIPPLACATLLSNILHSSRVFPFLTQIIIGGYDLLEGAKLFSLDPLGGMNEEKTFTATGSGSPIAYGVLEAGYDREMSVEEGIKLAINALKSAMERDTFSGNGISLAVITKEGVKIFEDEEIEKILDGMKAKSKKKTTKRGRRKSK.

A propeptide spans 1–6 (MDVMKG) (removed in mature form; by autocatalysis). The active-site Nucleophile is the Thr7.

It belongs to the peptidase T1B family. The 20S proteasome core is composed of 14 alpha and 14 beta subunits that assemble into four stacked heptameric rings, resulting in a barrel-shaped structure. The two inner rings, each composed of seven catalytic beta subunits, are sandwiched by two outer rings, each composed of seven alpha subunits. The catalytic chamber with the active sites is on the inside of the barrel. Has a gated structure, the ends of the cylinder being occluded by the N-termini of the alpha-subunits. Is capped at one or both ends by the proteasome regulatory ATPase, PAN.

The protein localises to the cytoplasm. It carries out the reaction Cleavage of peptide bonds with very broad specificity.. The formation of the proteasomal ATPase PAN-20S proteasome complex, via the docking of the C-termini of PAN into the intersubunit pockets in the alpha-rings, triggers opening of the gate for substrate entry. Interconversion between the open-gate and close-gate conformations leads to a dynamic regulation of the 20S proteasome proteolysis activity. Its function is as follows. Component of the proteasome core, a large protease complex with broad specificity involved in protein degradation. In Methanocaldococcus sp. (strain FS406-22), this protein is Proteasome subunit beta.